A 485-amino-acid chain; its full sequence is Transcription factor ETV6 (485 aa).

Polar residues predominate over residues 1–10; the sequence is MSETPAQSSI. The disordered stretch occupies residues 1 to 32; that stretch reads MSETPAQSSIKQERISYTPPESPVASHRSSTP. Lysine 11 is modified (N6-acetyllysine; alternate). Residue lysine 11 forms a Glycyl lysine isopeptide (Lys-Gly) (interchain with G-Cter in SUMO2); alternate linkage. A Phosphothreonine modification is found at threonine 18. The residue at position 22 (serine 22) is a Phosphoserine. One can recognise a PNT domain in the interval 41-125; that stretch reads ALRMEEDSIH…ELLQHILKQR (85 aa). The disordered stretch occupies residues 157–210; it reads NCVQRTPRTPAESVHHNPPTIELLHRPRSPITTNHRPSPDPEQQRPQRSPLDNM. Threonine 165 is modified (phosphothreonine). Residues serine 215, serine 240, and serine 251 each carry the phosphoserine modification. Lysine 284 is covalently cross-linked (Glycyl lysine isopeptide (Lys-Gly) (interchain with G-Cter in SUMO2)). Lysine 298 is modified (N6-acetyllysine; alternate). Residue lysine 298 forms a Glycyl lysine isopeptide (Lys-Gly) (interchain with G-Cter in SUMO2); alternate linkage. A Phosphoserine modification is found at serine 319. The segment at residues 335–416 is a DNA-binding region (ETS); that stretch reads RLLWDYVYQL…PGQRLLFRFM (82 aa). Glycyl lysine isopeptide (Lys-Gly) (interchain with G-Cter in SUMO2) cross-links involve residues lysine 399 and lysine 417. Residues 440–485 are disordered; that stretch reads EQTYQEDEPTIASPVGWPRGNLPTGTAGGVMEAGELGVAVKEETRE.

This sequence belongs to the ETS family. Can form homodimers or heterodimers with TEL2 or FLI1. Interacts with L3MBTL1 and HDAC9.

Its subcellular location is the nucleus. Transcriptional repressor; binds to the DNA sequence 5'-CCGGAAGT-3'. Plays a role in hematopoiesis and malignant transformation. This Mus musculus (Mouse) protein is Transcription factor ETV6 (Etv6).